The sequence spans 99 residues: DNA-binding protein HU (99 aa).

Residues 67-86 (REGRNPKTGAKMKIDAYNQP) are disordered.

It belongs to the bacterial histone-like protein family. In terms of assembly, homodimer.

Its function is as follows. Histone-like DNA-binding protein which is capable of wrapping DNA to stabilize it, and thus to prevent its denaturation under extreme environmental conditions. The chain is DNA-binding protein HU (hup) from Rickettsia felis (strain ATCC VR-1525 / URRWXCal2) (Rickettsia azadi).